The following is a 1458-amino-acid chain: GTPase-activating protein and VPS9 domain-containing protein 1 (1458 aa).

Residues 147–385 form the Ras-GAP domain; it reads SYLLQVLRYL…AAFLDVVIGG (239 aa). S227 carries the post-translational modification Phosphoserine. Residues T390 and T458 each carry the phosphothreonine modification. Residues 447–475 form a disordered region; the sequence is AKPGKSSSLDMTPYSTPQMSPATTPANKK. Polar residues predominate over residues 451 to 473; it reads KSSSLDMTPYSTPQMSPATTPAN. Y460 carries the post-translational modification Phosphotyrosine. S466 is subject to Phosphoserine. T470 is modified (phosphothreonine). S566 and S569 each carry phosphoserine. Disordered stretches follow at residues 574-608, 738-821, and 846-867; these read GISE…GSNG, LESC…PSQS, and HYAR…VGGN. Positions 578-588 are enriched in polar residues; it reads GPSNRSNSVSS. Phosphoserine occurs at positions 742, 746, and 757. The segment covering 758–777 has biased composition (polar residues); the sequence is SRPSTPGLSVVSGISATSED. The residue at position 762 (T762) is a Phosphothreonine. S766 is modified (phosphoserine). Positions 778 to 789 are enriched in basic and acidic residues; sequence IPNKIEDLRSEC. Phosphoserine is present on residues S876, S902, S903, S908, and S914. Basic and acidic residues predominate over residues 888–902; sequence KQRHSYPERLVRSRS. 2 disordered regions span residues 888-1022 and 1039-1072; these read KQRH…RLSA and KRTS…EEAL. A compositionally biased stretch (low complexity) spans 930 to 951; the sequence is AAATGATSLVAAPHSSSSSPSK. 2 stretches are compositionally biased toward basic and acidic residues: residues 952–973 and 995–1006; these read DSSR…DRSR and EKQEKDKDDLGP. S964 is subject to Phosphoserine. Residues 1010 to 1022 are compositionally biased toward polar residues; that stretch reads STLTDEPSPRLSA. Phosphoserine is present on residues S1017 and S1044. The segment covering 1061–1071 has biased composition (basic and acidic residues); that stretch reads ESAHDSPREEA. Phosphoserine is present on residues S1076 and S1083. The 141-residue stretch at 1318–1458 folds into the VPS9 domain; it reads ILRDQVLHEH…EFIKTIDDRK (141 aa).

Belongs to the GAPVD1 family. As to quaternary structure, interacts with RAB5A. Interacts with TRIP10/CIP4. In terms of tissue distribution, present in adipocytes and fibroblasts (at protein level). Ubiquitously expressed.

The protein localises to the membrane. It localises to the endosome. Acts both as a GTPase-activating protein (GAP) and a guanine nucleotide exchange factor (GEF), and participates in various processes such as endocytosis, insulin receptor internalization or LC2A4/GLUT4 trafficking. Acts as a GEF for the Ras-related protein RAB31 by exchanging bound GDP for free GTP, leading to regulate LC2A4/GLUT4 trafficking. In the absence of insulin, it maintains RAB31 in an active state and promotes a futile cycle between LC2A4/GLUT4 storage vesicles and early endosomes, retaining LC2A4/GLUT4 inside the cells. Upon insulin stimulation, it is translocated to the plasma membrane, releasing LC2A4/GLUT4 from intracellular storage vesicles. Also involved in EGFR trafficking and degradation, possibly by promoting EGFR ubiquitination and subsequent degradation by the proteasome. Has GEF activity for Rab5 and GAP activity for Ras. This Mus musculus (Mouse) protein is GTPase-activating protein and VPS9 domain-containing protein 1 (Gapvd1).